Here is a 257-residue protein sequence, read N- to C-terminus: Hydroxyacylglutathione hydrolase (257 aa).

Zn(2+) contacts are provided by H54, H56, D58, H59, H113, D137, and H175.

The protein belongs to the metallo-beta-lactamase superfamily. Glyoxalase II family. As to quaternary structure, monomer. Requires Zn(2+) as cofactor.

The catalysed reaction is an S-(2-hydroxyacyl)glutathione + H2O = a 2-hydroxy carboxylate + glutathione + H(+). It functions in the pathway secondary metabolite metabolism; methylglyoxal degradation; (R)-lactate from methylglyoxal: step 2/2. Its function is as follows. Thiolesterase that catalyzes the hydrolysis of S-D-lactoyl-glutathione to form glutathione and D-lactic acid. This is Hydroxyacylglutathione hydrolase from Trichormus variabilis (strain ATCC 29413 / PCC 7937) (Anabaena variabilis).